The sequence spans 591 residues: V-type ATP synthase alpha chain (591 aa).

233-240 (GPFGAGKT) is a binding site for ATP.

This sequence belongs to the ATPase alpha/beta chains family.

It carries out the reaction ATP + H2O + 4 H(+)(in) = ADP + phosphate + 5 H(+)(out). Its function is as follows. Produces ATP from ADP in the presence of a proton gradient across the membrane. The V-type alpha chain is a catalytic subunit. The chain is V-type ATP synthase alpha chain from Streptococcus pneumoniae (strain Hungary19A-6).